A 115-amino-acid chain; its full sequence is Tyrosine-protein phosphatase 18 (115 aa).

In terms of domain architecture, Tyrosine-protein phosphatase spans 1-115; the sequence is WLMIVEQKCR…ETGSDAPMVV (115 aa). D83 lines the substrate pocket.

This sequence belongs to the protein-tyrosine phosphatase family.

The enzyme catalyses O-phospho-L-tyrosyl-[protein] + H2O = L-tyrosyl-[protein] + phosphate. The protein is Tyrosine-protein phosphatase 18 (STY-18) of Styela plicata (Wrinkled sea squirt).